Consider the following 370-residue polypeptide: Putative agmatine deiminase (370 aa).

Cys-361 acts as the Amidino-cysteine intermediate in catalysis.

The protein belongs to the agmatine deiminase family.

The catalysed reaction is agmatine + H2O = N-carbamoylputrescine + NH4(+). This chain is Putative agmatine deiminase, found in Shewanella baltica (strain OS185).